Reading from the N-terminus, the 274-residue chain is Large ribosomal subunit protein uL2cz/uL2cy (274 aa).

Disordered stretches follow at residues methionine 1 to glutamine 21 and asparagine 224 to alanine 252.

This sequence belongs to the universal ribosomal protein uL2 family. Part of the 50S ribosomal subunit.

The protein resides in the plastid. The protein localises to the chloroplast. The sequence is that of Large ribosomal subunit protein uL2cz/uL2cy (rpl2-A) from Olimarabidopsis pumila (Dwarf rocket).